The primary structure comprises 338 residues: Oxygen-dependent coproporphyrinogen-III oxidase (338 aa).

Residue serine 104 participates in substrate binding. The a divalent metal cation site is built by histidine 108 and histidine 118. Histidine 118 acts as the Proton donor in catalysis. 120–122 (NYR) is a substrate binding site. 2 residues coordinate a divalent metal cation: histidine 152 and histidine 182. Positions 274–309 (YVEFNLVYDRGTIFGLQTNGRTESILMSLPPLVRWE) are important for dimerization.

This sequence belongs to the aerobic coproporphyrinogen-III oxidase family. In terms of assembly, homodimer. Requires a divalent metal cation as cofactor.

The protein localises to the cytoplasm. It catalyses the reaction coproporphyrinogen III + O2 + 2 H(+) = protoporphyrinogen IX + 2 CO2 + 2 H2O. It functions in the pathway porphyrin-containing compound metabolism; protoporphyrin-IX biosynthesis; protoporphyrinogen-IX from coproporphyrinogen-III (O2 route): step 1/1. Its function is as follows. Involved in the heme and chlorophyll biosynthesis. Catalyzes the aerobic oxidative decarboxylation of propionate groups of rings A and B of coproporphyrinogen-III to yield the vinyl groups in protoporphyrinogen-IX. This chain is Oxygen-dependent coproporphyrinogen-III oxidase, found in Thermosynechococcus vestitus (strain NIES-2133 / IAM M-273 / BP-1).